The primary structure comprises 270 residues: Putative methylsterol monooxygenase DDB_G0269788 (270 aa).

A run of 3 helical transmembrane segments spans residues phenylalanine 31 to methionine 51, isoleucine 82 to serine 102, and isoleucine 110 to tryptophan 130. The region spanning alanine 118–threonine 249 is the Fatty acid hydroxylase domain. The short motif at histidine 132–histidine 136 is the Histidine box-1 element. The Histidine box-2 signature appears at histidine 145–histidine 149. Positions phenylalanine 224 to glutamate 230 match the Histidine box-3 motif.

Belongs to the sterol desaturase family. Fe cation serves as cofactor.

The protein localises to the endoplasmic reticulum membrane. It carries out the reaction 4,4-dimethyl-5alpha-cholest-7-en-3beta-ol + 6 Fe(II)-[cytochrome b5] + 3 O2 + 5 H(+) = 4alpha-carboxy-4beta-methyl-5alpha-cholest-7-ene-3beta-ol + 6 Fe(III)-[cytochrome b5] + 4 H2O. It functions in the pathway steroid biosynthesis; zymosterol biosynthesis; zymosterol from lanosterol: step 3/6. The sequence is that of Putative methylsterol monooxygenase DDB_G0269788 from Dictyostelium discoideum (Social amoeba).